Here is an 87-residue protein sequence, read N- to C-terminus: Large ribosomal subunit protein bL27 (87 aa).

A disordered region spans residues 1–25; sequence MAHKKGASSSRNGRDSNAQRLGVKR. The segment covering 7–19 has biased composition (polar residues); that stretch reads ASSSRNGRDSNAQ.

Belongs to the bacterial ribosomal protein bL27 family.

This chain is Large ribosomal subunit protein bL27, found in Rhodococcus opacus (strain B4).